Consider the following 450-residue polypeptide: Cyclin-A2-3 (450 aa).

2 disordered regions span residues alanine 18 to lysine 53 and asparagine 75 to alanine 94. Polar residues predominate over residues glutamate 23–valine 34.

This sequence belongs to the cyclin family. Cyclin AB subfamily. As to quaternary structure, interacts with CDKA-1. Interacts with SAMBA.

It localises to the nucleus. Its function is as follows. Negatively regulates endocycles and acts as a regulator of ploidy levels in endoreduplication. Promotes divisions in the guard cells (GCs) after the guard mother cells (GMC) symmetric division. The sequence is that of Cyclin-A2-3 (CYCA2-3) from Arabidopsis thaliana (Mouse-ear cress).